The following is a 637-amino-acid chain: Biosynthetic arginine decarboxylase (637 aa).

Position 101 is an N6-(pyridoxal phosphate)lysine (lysine 101). A substrate-binding site is contributed by 286–296 (FDVGGGLAVDY).

It belongs to the Orn/Lys/Arg decarboxylase class-II family. SpeA subfamily. Mg(2+) is required as a cofactor. It depends on pyridoxal 5'-phosphate as a cofactor.

It catalyses the reaction L-arginine + H(+) = agmatine + CO2. The protein operates within amine and polyamine biosynthesis; agmatine biosynthesis; agmatine from L-arginine: step 1/1. Its function is as follows. Catalyzes the biosynthesis of agmatine from arginine. This is Biosynthetic arginine decarboxylase from Shewanella woodyi (strain ATCC 51908 / MS32).